The primary structure comprises 384 residues: Probable inactive linolenate hydroperoxide lyase (384 aa).

Cys-346 contributes to the heme binding site.

This sequence belongs to the cytochrome P450 family. It depends on heme as a cofactor. As to expression, expressed in roots, leaves, flowers and siliques.

This is Probable inactive linolenate hydroperoxide lyase from Arabidopsis thaliana (Mouse-ear cress).